Consider the following 277-residue polypeptide: S-formylglutathione hydrolase FrmB (277 aa).

Residues serine 145, aspartate 221, and histidine 254 each act as charge relay system in the active site.

Belongs to the esterase D family.

It catalyses the reaction S-formylglutathione + H2O = formate + glutathione + H(+). Serine hydrolase involved in the detoxification of formaldehyde. Hydrolyzes S-formylglutathione to glutathione and formate. In Escherichia coli O157:H7, this protein is S-formylglutathione hydrolase FrmB (frmB).